A 339-amino-acid chain; its full sequence is Cytochrome c biogenesis protein CcsA (339 aa).

The next 7 membrane-spanning stretches (helical) occupy residues 6-26, 37-57, 71-91, 97-117, 142-162, 247-267, and 281-299; these read LEHILAHISFFLPFLATLVFW, IGSLGNKSIIIAYICITGLLL, LYESFMFLSWSFCLIHIVSEI, WLGIIIVLIAMLTHGFATVGL, MMIPSYATLPCGSLLVIALLI, IISLGSLFLTIGILSGAVWVN, and TWALITWLLSAIHIHIRMI.

Belongs to the CcmF/CycK/Ccl1/NrfE/CcsA family. May interact with Ccs1.

The protein localises to the plastid. It is found in the chloroplast thylakoid membrane. In terms of biological role, required during biogenesis of c-type cytochromes (cytochrome c6 and cytochrome f) at the step of heme attachment. The polypeptide is Cytochrome c biogenesis protein CcsA (Anthoceros angustus (Hornwort)).